Reading from the N-terminus, the 1091-residue chain is ATPase family AAA domain-containing protein 2 (1091 aa).

The segment at 32–211 is disordered; that stretch reads LEDLGVFNET…HFERRRKRSR (180 aa). Basic and acidic residues predominate over residues 53-62; the sequence is KQKDIQRTDE. A compositionally biased stretch (acidic residues) spans 74–119; the sequence is SSEEGEDQEHEDDGEDEDDEDEDDDDDDDDDDDDDEDDEDEEDGEE. Residue K148 forms a Glycyl lysine isopeptide (Lys-Gly) (interchain with G-Cter in SUMO2) linkage. S158, S168, S173, and S241 each carry phosphoserine. 298 to 305 is a binding site for ATP; the sequence is GPPGTGKT. A phosphoserine mark is found at S577 and S582. Coiled coils occupy residues 801 to 825 and 917 to 943; these read LTAE…IFLR and YAII…KKRG. Positions 811–923 constitute a Bromo domain; sequence EQEEDTFREL…DTAYAIIKEE (113 aa). K959 is covalently cross-linked (Glycyl lysine isopeptide (Lys-Gly) (interchain with G-Cter in SUMO2)). A disordered region spans residues 961-985; it reads NSTLVGDKRSDPEQNEKLKTPSTPV. Over residues 966–979 the composition is skewed to basic and acidic residues; the sequence is GDKRSDPEQNEKLK. Phosphoserine is present on S970. K979 is covalently cross-linked (Glycyl lysine isopeptide (Lys-Gly) (interchain with G-Cter in SUMO2)). T980 and T983 each carry phosphothreonine. At S1003 the chain carries Phosphoserine. Position 1024 is a phosphothreonine (T1024).

This sequence belongs to the AAA ATPase family. Interaction with ESR1 and NCOA3 is enhanced by estradiol. Interacts with acetylated lysine residues on histone H1.4, H2A, H2B and H3 (in vitro).

The protein resides in the nucleus. The catalysed reaction is ATP + H2O = ADP + phosphate + H(+). May be a transcriptional coactivator of the nuclear receptor ESR1 required to induce the expression of a subset of estradiol target genes, such as CCND1, MYC and E2F1. May play a role in the recruitment or occupancy of CREBBP at some ESR1 target gene promoters. May be required for histone hyperacetylation. The polypeptide is ATPase family AAA domain-containing protein 2 (ATAD2) (Pongo abelii (Sumatran orangutan)).